A 363-amino-acid chain; its full sequence is Methylthioribose-1-phosphate isomerase (363 aa).

Catalysis depends on D253, which acts as the Proton donor.

This sequence belongs to the eIF-2B alpha/beta/delta subunits family. MtnA subfamily.

The protein localises to the cytoplasm. It is found in the nucleus. It carries out the reaction 5-(methylsulfanyl)-alpha-D-ribose 1-phosphate = 5-(methylsulfanyl)-D-ribulose 1-phosphate. The protein operates within amino-acid biosynthesis; L-methionine biosynthesis via salvage pathway; L-methionine from S-methyl-5-thio-alpha-D-ribose 1-phosphate: step 1/6. Functionally, catalyzes the interconversion of methylthioribose-1-phosphate (MTR-1-P) into methylthioribulose-1-phosphate (MTRu-1-P). The protein is Methylthioribose-1-phosphate isomerase of Drosophila grimshawi (Hawaiian fruit fly).